A 609-amino-acid polypeptide reads, in one-letter code: UvrABC system protein C (609 aa).

The 78-residue stretch at Thr15–Val92 folds into the GIY-YIG domain. Residues Asp202–Leu237 form the UVR domain.

Belongs to the UvrC family. In terms of assembly, interacts with UvrB in an incision complex.

It is found in the cytoplasm. Functionally, the UvrABC repair system catalyzes the recognition and processing of DNA lesions. UvrC both incises the 5' and 3' sides of the lesion. The N-terminal half is responsible for the 3' incision and the C-terminal half is responsible for the 5' incision. The sequence is that of UvrABC system protein C from Coxiella burnetii (strain CbuK_Q154) (Coxiella burnetii (strain Q154)).